The chain runs to 303 residues: Cobalamin biosynthesis protein CobD (303 aa).

Transmembrane regions (helical) follow at residues 65–85 (LLAWLLSLLPGIGWLAEIVLL), 147–167 (DAVFAALFWFIVAGAPGVVLY), 235–255 (AGPVMAAGAGALGVVLGGAAI), and 283–303 (LVWAGVGVWLLVLLFGGWLYA).

It belongs to the CobD/CbiB family.

Its subcellular location is the cell membrane. It functions in the pathway cofactor biosynthesis; adenosylcobalamin biosynthesis. Its function is as follows. Converts cobyric acid to cobinamide by the addition of aminopropanol on the F carboxylic group. In Stutzerimonas stutzeri (strain A1501) (Pseudomonas stutzeri), this protein is Cobalamin biosynthesis protein CobD.